Consider the following 628-residue polypeptide: 3-hydroxy-3-methylglutaryl-coenzyme A reductase 2 (628 aa).

2 helical membrane passes run Pro38 to Leu58 and Glu78 to Ile98. The interval Asp99–Glu212 is linker. N-linked (GlcNAc...) asparagine glycosylation is present at Asn153. The interval Glu213 to Ser628 is catalytic. Catalysis depends on Glu307, which acts as the Charge relay system. An N-linked (GlcNAc...) asparagine glycan is attached at Asn371. Lys439 acts as the Charge relay system in catalysis. An N-linked (GlcNAc...) asparagine glycan is attached at Asn484. Asp515 (charge relay system) is an active-site residue. Catalysis depends on His613, which acts as the Proton donor. 2 N-linked (GlcNAc...) asparagine glycosylation sites follow: Asn617 and Asn625.

Belongs to the HMG-CoA reductase family.

The protein localises to the endoplasmic reticulum membrane. It localises to the mitochondrion membrane. The protein resides in the plastid membrane. The catalysed reaction is (R)-mevalonate + 2 NADP(+) + CoA = (3S)-3-hydroxy-3-methylglutaryl-CoA + 2 NADPH + 2 H(+). Its pathway is metabolic intermediate biosynthesis; (R)-mevalonate biosynthesis; (R)-mevalonate from acetyl-CoA: step 3/3. Catalyzes the synthesis of mevalonate. The specific precursor of all isoprenoid compounds present in plants. The chain is 3-hydroxy-3-methylglutaryl-coenzyme A reductase 2 (HMG2) from Gossypium hirsutum (Upland cotton).